A 710-amino-acid polypeptide reads, in one-letter code: Polyribonucleotide nucleotidyltransferase (710 aa).

Mg(2+) is bound by residues Asp488 and Asp494. Positions 555–614 (PRIETITIPTDKIRDVIGSGGKVIREIVETTGAKVDVNDDGVIKVSSSDGASIKAALDWI) constitute a KH domain. Residues 624–692 (GQIYKGKVVK…DRGKVRLSMK (69 aa)) form the S1 motif domain.

The protein belongs to the polyribonucleotide nucleotidyltransferase family. Mg(2+) is required as a cofactor.

Its subcellular location is the cytoplasm. The enzyme catalyses RNA(n+1) + phosphate = RNA(n) + a ribonucleoside 5'-diphosphate. Functionally, involved in mRNA degradation. Catalyzes the phosphorolysis of single-stranded polyribonucleotides processively in the 3'- to 5'-direction. The chain is Polyribonucleotide nucleotidyltransferase from Maricaulis maris (strain MCS10) (Caulobacter maris).